The primary structure comprises 161 residues: MGWHSNREFFVSWEELHRATRELARRQLPAEQYKGIIAVSRGGLVPAAIVSRELNIRVVDCVAVSSYDHTEQRDDLQVMKDVTATEDGEGFLVVDDLVDTGNTMKFLRERLPKAKFVTVYAKPSGMEMVDDFVADLAQDTWIHFPWDMHLHYIEPLAGQES.

Residues 41 to 42 and 95 to 103 contribute to the 5-phospho-alpha-D-ribose 1-diphosphate site; these read RG and DDLVDTGNT. Asp96 is a binding site for Mg(2+). Guanine is bound by residues Asp99 and Ile142. Xanthine-binding residues include Asp99 and Ile142. GMP-binding positions include 99–103 and 141–142; these read DTGNT and WI.

The protein belongs to the purine/pyrimidine phosphoribosyltransferase family. XGPT subfamily. Homotetramer. It depends on Mg(2+) as a cofactor.

It localises to the cell inner membrane. The enzyme catalyses GMP + diphosphate = guanine + 5-phospho-alpha-D-ribose 1-diphosphate. It carries out the reaction XMP + diphosphate = xanthine + 5-phospho-alpha-D-ribose 1-diphosphate. The catalysed reaction is IMP + diphosphate = hypoxanthine + 5-phospho-alpha-D-ribose 1-diphosphate. The protein operates within purine metabolism; GMP biosynthesis via salvage pathway; GMP from guanine: step 1/1. It participates in purine metabolism; XMP biosynthesis via salvage pathway; XMP from xanthine: step 1/1. In terms of biological role, purine salvage pathway enzyme that catalyzes the transfer of the ribosyl-5-phosphate group from 5-phospho-alpha-D-ribose 1-diphosphate (PRPP) to the N9 position of the 6-oxopurines guanine and xanthine to form the corresponding ribonucleotides GMP (guanosine 5'-monophosphate) and XMP (xanthosine 5'-monophosphate), with the release of PPi. To a lesser extent, also acts on hypoxanthine. The chain is Xanthine-guanine phosphoribosyltransferase from Idiomarina loihiensis (strain ATCC BAA-735 / DSM 15497 / L2-TR).